The following is an 84-amino-acid chain: Small ribosomal subunit protein bS18A (84 aa).

It belongs to the bacterial ribosomal protein bS18 family. As to quaternary structure, part of the 30S ribosomal subunit. Forms a tight heterodimer with protein bS6.

Functionally, binds as a heterodimer with protein bS6 to the central domain of the 16S rRNA, where it helps stabilize the platform of the 30S subunit. The polypeptide is Small ribosomal subunit protein bS18A (rpsR1) (Mycobacterium bovis (strain ATCC BAA-935 / AF2122/97)).